The following is a 426-amino-acid chain: uncharacterized protein (426 aa).

Residues Lys17–Pro114 form a disordered region.

It is found in the plastid. This is an uncharacterized protein from Euglena longa (Euglenophycean alga).